We begin with the raw amino-acid sequence, 868 residues long: DNA mismatch repair protein MutS (868 aa).

Residue 620–627 participates in ATP binding; it reads GPNMSGKS.

Belongs to the DNA mismatch repair MutS family.

In terms of biological role, this protein is involved in the repair of mismatches in DNA. It is possible that it carries out the mismatch recognition step. This protein has a weak ATPase activity. In Flavobacterium johnsoniae (strain ATCC 17061 / DSM 2064 / JCM 8514 / BCRC 14874 / CCUG 350202 / NBRC 14942 / NCIMB 11054 / UW101) (Cytophaga johnsonae), this protein is DNA mismatch repair protein MutS.